The sequence spans 149 residues: D-aminoacyl-tRNA deacylase (149 aa).

A Gly-cisPro motif, important for rejection of L-amino acids motif is present at residues 137–138; it reads GP.

The protein belongs to the DTD family. As to quaternary structure, homodimer.

The protein localises to the cytoplasm. It catalyses the reaction glycyl-tRNA(Ala) + H2O = tRNA(Ala) + glycine + H(+). The catalysed reaction is a D-aminoacyl-tRNA + H2O = a tRNA + a D-alpha-amino acid + H(+). An aminoacyl-tRNA editing enzyme that deacylates mischarged D-aminoacyl-tRNAs. Also deacylates mischarged glycyl-tRNA(Ala), protecting cells against glycine mischarging by AlaRS. Acts via tRNA-based rather than protein-based catalysis; rejects L-amino acids rather than detecting D-amino acids in the active site. By recycling D-aminoacyl-tRNA to D-amino acids and free tRNA molecules, this enzyme counteracts the toxicity associated with the formation of D-aminoacyl-tRNA entities in vivo and helps enforce protein L-homochirality. The sequence is that of D-aminoacyl-tRNA deacylase from Herminiimonas arsenicoxydans.